A 184-amino-acid polypeptide reads, in one-letter code: Probable RNA 2'-phosphotransferase (184 aa).

The protein belongs to the KptA/TPT1 family.

Its function is as follows. Removes the 2'-phosphate from RNA via an intermediate in which the phosphate is ADP-ribosylated by NAD followed by a presumed transesterification to release the RNA and generate ADP-ribose 1''-2''-cyclic phosphate (APPR&gt;P). May function as an ADP-ribosylase. This chain is Probable RNA 2'-phosphotransferase, found in Escherichia coli O8 (strain IAI1).